Consider the following 319-residue polypeptide: Protoheme IX farnesyltransferase (319 aa).

9 consecutive transmembrane segments (helical) span residues 34–54, 55–75, 95–115, 119–139, 155–175, 182–202, 221–241, 244–264, and 291–311; these read VMSL…GHIN, PVLG…SGAL, IPAG…LSGF, ILGL…IFFY, IVIG…CVTG, VVLF…LALF, VPTT…IGVV, FMGF…VIFV, and IFYL…AVLM.

This sequence belongs to the UbiA prenyltransferase family. Protoheme IX farnesyltransferase subfamily.

It localises to the cell inner membrane. It catalyses the reaction heme b + (2E,6E)-farnesyl diphosphate + H2O = Fe(II)-heme o + diphosphate. Its pathway is porphyrin-containing compound metabolism; heme O biosynthesis; heme O from protoheme: step 1/1. Its function is as follows. Converts heme B (protoheme IX) to heme O by substitution of the vinyl group on carbon 2 of heme B porphyrin ring with a hydroxyethyl farnesyl side group. The chain is Protoheme IX farnesyltransferase from Rhizobium rhizogenes (strain K84 / ATCC BAA-868) (Agrobacterium radiobacter).